A 156-amino-acid polypeptide reads, in one-letter code: Small ribosomal subunit protein uS7 (156 aa).

This sequence belongs to the universal ribosomal protein uS7 family. As to quaternary structure, part of the 30S ribosomal subunit. Contacts proteins S9 and S11.

Functionally, one of the primary rRNA binding proteins, it binds directly to 16S rRNA where it nucleates assembly of the head domain of the 30S subunit. Is located at the subunit interface close to the decoding center, probably blocks exit of the E-site tRNA. In Prochlorococcus marinus (strain MIT 9211), this protein is Small ribosomal subunit protein uS7.